The sequence spans 85 residues: Conotoxin Cap15a (85 aa).

The first 23 residues, 1–23 (MEKLTFLILVATVLLTIHVLVQS), serve as a signal peptide directing secretion. Residues 24-49 (VGDKHLKRRPKQYATKHLSALMRGHR) constitute a propeptide that is removed on maturation. Gln50 bears the Pyrrolidone carboxylic acid mark.

The protein belongs to the conotoxin O2 superfamily. In terms of processing, contains 4 disulfide bonds. In terms of tissue distribution, expressed by the venom duct.

The protein resides in the secreted. The protein is Conotoxin Cap15a of Conus capitaneus (Captain cone).